Here is a 610-residue protein sequence, read N- to C-terminus: Manganese lipoxygenase (610 aa).

The first 16 residues, 1 to 16 (MVALLIFLGIFTCVET), serve as a signal peptide directing secretion. The region spanning 47–610 (FTLPNEDDEI…PGVIPFYLSV (564 aa)) is the Lipoxygenase domain. 2 N-linked (GlcNAc...) asparagine glycosylation sites follow: N157 and N259. 2 residues coordinate Mn(2+): H290 and H295. A glycan (N-linked (GlcNAc...) asparagine) is linked at N386. Residues H475 and N479 each contribute to the Mn(2+) site. N540 carries an N-linked (GlcNAc...) asparagine glycan. V610 contributes to the Mn(2+) binding site.

Belongs to the lipoxygenase family. Manganese lipoxygenase subfamily. It depends on Mn(2+) as a cofactor. In terms of processing, N- and O-glycosylated.

Its subcellular location is the secreted. It catalyses the reaction (9Z,12Z)-octadecadienoate + O2 = (11S)-hydroperoxy-(9Z,12Z)-octadecadienoate. It carries out the reaction (9Z,12Z)-octadecadienoate + O2 = (11R)-hydroperoxy-(9Z,12Z)-octadecadienoate. The catalysed reaction is (9Z,12Z)-octadecadienoate + O2 = (13S)-hydroperoxy-(9Z,11E)-octadecadienoate. The enzyme catalyses (9Z,12Z,15Z)-octadecatrienoate + O2 = (11S)-hydroperoxy-(9Z,12Z,15Z)-octadecatrienoate. In terms of biological role, lipoxygenase that metabolizes linoleic and alpha-linolenic acids to 9-, 11- and 13-hydroperoxy fatty acids. Oxidizes linoleic acid to mainly 11R-, 13S- and racemic 9-HPODE, and alpha-linolenic acid to 11-HPOTrE. In Fusarium oxysporum (strain Fo5176) (Fusarium vascular wilt), this protein is Manganese lipoxygenase.